The primary structure comprises 64 residues: Large ribosomal subunit protein bL35 (64 aa).

A disordered region spans residues 27–47 (MNGSHNLEKKNRKRSRRLHQA). Basic residues predominate over residues 36–45 (KNRKRSRRLH).

This sequence belongs to the bacterial ribosomal protein bL35 family.

The polypeptide is Large ribosomal subunit protein bL35 (Chlorobium phaeobacteroides (strain DSM 266 / SMG 266 / 2430)).